A 343-amino-acid chain; its full sequence is Dihydroorotase (343 aa).

Residues His-13 and His-15 each contribute to the Zn(2+) site. Residues 15–17 and Asn-41 each bind substrate; that span reads HLR. Lys-99, His-136, and His-174 together coordinate Zn(2+). Residue Lys-99 is modified to N6-carboxylysine. His-136 is a substrate binding site. Leu-219 is a substrate binding site. Asp-247 lines the Zn(2+) pocket. Asp-247 is a catalytic residue. His-251 and Ala-263 together coordinate substrate.

This sequence belongs to the metallo-dependent hydrolases superfamily. DHOase family. Class II DHOase subfamily. As to quaternary structure, homodimer. Requires Zn(2+) as cofactor.

It catalyses the reaction (S)-dihydroorotate + H2O = N-carbamoyl-L-aspartate + H(+). Its pathway is pyrimidine metabolism; UMP biosynthesis via de novo pathway; (S)-dihydroorotate from bicarbonate: step 3/3. In terms of biological role, catalyzes the reversible cyclization of carbamoyl aspartate to dihydroorotate. This Shewanella oneidensis (strain ATCC 700550 / JCM 31522 / CIP 106686 / LMG 19005 / NCIMB 14063 / MR-1) protein is Dihydroorotase.